Reading from the N-terminus, the 40-residue chain is Large ribosomal subunit protein bL36B (40 aa).

The protein belongs to the bacterial ribosomal protein bL36 family.

This is Large ribosomal subunit protein bL36B from Kocuria rhizophila (strain ATCC 9341 / DSM 348 / NBRC 103217 / DC2201).